The sequence spans 240 residues: Phosphoribosylaminoimidazole-succinocarboxamide synthase (240 aa).

The protein belongs to the SAICAR synthetase family.

It catalyses the reaction 5-amino-1-(5-phospho-D-ribosyl)imidazole-4-carboxylate + L-aspartate + ATP = (2S)-2-[5-amino-1-(5-phospho-beta-D-ribosyl)imidazole-4-carboxamido]succinate + ADP + phosphate + 2 H(+). Its pathway is purine metabolism; IMP biosynthesis via de novo pathway; 5-amino-1-(5-phospho-D-ribosyl)imidazole-4-carboxamide from 5-amino-1-(5-phospho-D-ribosyl)imidazole-4-carboxylate: step 1/2. The chain is Phosphoribosylaminoimidazole-succinocarboxamide synthase from Neorickettsia sennetsu (strain ATCC VR-367 / Miyayama) (Ehrlichia sennetsu).